We begin with the raw amino-acid sequence, 314 residues long: Protein ATP1B4 (314 aa).

Residues 1–17 (MATTAGEQANYLQSADS) are compositionally biased toward polar residues. Residues 1 to 37 (MATTAGEQANYLQSADSMSDGRQHHPEEAGEKKQEEQ) form a disordered region. The Cytoplasmic segment spans residues 1–69 (MATTAGEQAN…VLGRDKKSWA (69 aa)). Basic and acidic residues predominate over residues 19–37 (SDGRQHHPEEAGEKKQEEQ). Residues 70-90 (LILLFYFILYCFLAGLFALCI) traverse the membrane as a helical segment. Residues 91–314 (YGLLATISPY…GRVAFTLHIG (224 aa)) lie on the Extracellular side of the membrane. A disulfide bridge connects residues Cys-160 and Cys-179. Asn-188 carries N-linked (GlcNAc...) asparagine glycosylation. Intrachain disulfides connect Cys-189–Cys-205 and Cys-228–Cys-287. Asn-264 carries N-linked (GlcNAc...) asparagine glycosylation.

Belongs to the X(+)/potassium ATPases subunit beta family. As to quaternary structure, composed of two subunits: alpha (catalytic) and beta (accessory). Post-translationally, glycosylated. As to expression, expressed in skeletal muscle, liver, lung, kidney, heart, brain and skin.

Its subcellular location is the membrane. Its function is as follows. This is the non-catalytic component of the active enzyme, which catalyzes the hydrolysis of ATP coupled with the exchange of Na(+) and K(+) ions across the plasma membrane. The sequence is that of Protein ATP1B4 (atp1b4) from Xenopus laevis (African clawed frog).